A 214-amino-acid polypeptide reads, in one-letter code: Ribonuclease P protein component 3 (214 aa).

It belongs to the eukaryotic/archaeal RNase P protein component 3 family. As to quaternary structure, consists of a catalytic RNA component and at least 4-5 protein subunits.

The protein localises to the cytoplasm. It catalyses the reaction Endonucleolytic cleavage of RNA, removing 5'-extranucleotides from tRNA precursor.. Part of ribonuclease P, a protein complex that generates mature tRNA molecules by cleaving their 5'-ends. The sequence is that of Ribonuclease P protein component 3 from Thermococcus gammatolerans (strain DSM 15229 / JCM 11827 / EJ3).